Reading from the N-terminus, the 276-residue chain is Methylesterase 17 (276 aa).

Positions 19-138 constitute an AB hydrolase-1 domain; sequence PHFVLIHGMS…TDEDMKDGVP (120 aa). The active-site Acyl-ester intermediate is S95. Residues D225 and H252 each act as charge relay system in the active site.

The protein belongs to the AB hydrolase superfamily. Methylesterase family. In terms of tissue distribution, expressed in several tissues of seedlings and adult plants, with a higher relative level of expression in the seedling shoot apex and the adult stem.

The catalysed reaction is methyl (indol-3-yl)acetate + H2O = (indol-3-yl)acetate + methanol + H(+). Its pathway is plant hormone biosynthesis. Its function is as follows. Methylesterase that efficiently and specifically hydrolyzes methyl indole-3-acetic acid (MeIAA) to IAA (auxin). MeIAA is believed to be an inactive form of auxin that needs to be demethylated to exert a biological effect. This Arabidopsis thaliana (Mouse-ear cress) protein is Methylesterase 17.